The following is a 471-amino-acid chain: 3-isopropylmalate dehydratase large subunit (471 aa).

Positions 347, 407, and 410 each coordinate [4Fe-4S] cluster. Positions 417-443 (TLQPGERSASTSNRNFEGRQGKGGRTH) are disordered.

The protein belongs to the aconitase/IPM isomerase family. LeuC type 1 subfamily. Heterodimer of LeuC and LeuD. The cofactor is [4Fe-4S] cluster.

The enzyme catalyses (2R,3S)-3-isopropylmalate = (2S)-2-isopropylmalate. Its pathway is amino-acid biosynthesis; L-leucine biosynthesis; L-leucine from 3-methyl-2-oxobutanoate: step 2/4. Its function is as follows. Catalyzes the isomerization between 2-isopropylmalate and 3-isopropylmalate, via the formation of 2-isopropylmaleate. This chain is 3-isopropylmalate dehydratase large subunit, found in Nocardioides sp. (strain ATCC BAA-499 / JS614).